Consider the following 165-residue polypeptide: Phosphopantetheine adenylyltransferase (165 aa).

Residue Thr-10 coordinates substrate. ATP is bound by residues 10–11 and His-18; that span reads TF. The substrate site is built by Lys-42, Leu-75, and Arg-89. ATP-binding positions include 90–92, Glu-100, and 125–131; these read GLR and YTYVASS.

This sequence belongs to the bacterial CoaD family. In terms of assembly, homohexamer. Mg(2+) is required as a cofactor.

The protein resides in the cytoplasm. It catalyses the reaction (R)-4'-phosphopantetheine + ATP + H(+) = 3'-dephospho-CoA + diphosphate. Its pathway is cofactor biosynthesis; coenzyme A biosynthesis; CoA from (R)-pantothenate: step 4/5. In terms of biological role, reversibly transfers an adenylyl group from ATP to 4'-phosphopantetheine, yielding dephospho-CoA (dPCoA) and pyrophosphate. In Chlorobium phaeobacteroides (strain BS1), this protein is Phosphopantetheine adenylyltransferase.